The primary structure comprises 306 residues: Palmitoyl-protein thioesterase 1 (306 aa).

An N-terminal signal peptide occupies residues 1–27 (MASSSCLWLLALAFLLGSCASLALGHL). Intrachain disulfides connect Cys45–Cys46, Cys96–Cys128, and Cys152–Cys160. The active site involves Ser115. Residues Asn197, Asn212, and Asn232 are each glycosylated (N-linked (GlcNAc...) asparagine). Residues Asp233 and His289 contribute to the active site.

This sequence belongs to the palmitoyl-protein thioesterase family. As to quaternary structure, interacts with CLN5, ATP5F1A and ATP5F1B. Post-translationally, glycosylated. In terms of tissue distribution, spleen, brain, seminal vesicle, and testis. Lower levels of activity in liver, heart, lung, and skeletal muscle.

Its subcellular location is the lysosome. The protein localises to the secreted. It is found in the golgi apparatus. The protein resides in the endoplasmic reticulum. It catalyses the reaction S-hexadecanoyl-L-cysteinyl-[protein] + H2O = L-cysteinyl-[protein] + hexadecanoate + H(+). The catalysed reaction is hexadecanoyl-CoA + H2O = hexadecanoate + CoA + H(+). It carries out the reaction S-hexadecanoyl-N-acetylcysteamine + H2O = N-acetylcysteamine + hexadecanoate + H(+). The enzyme catalyses S-hexadecanoyl-N-acetylcysteine methyl ester + H2O = N-acetylcysteine methyl ester + hexadecanoate + H(+). With respect to regulation, palmitoylation reduces PPT1 enzymatic activity. Has thioesterase activity against fatty acid thioesters with 14 -18 carbons, including palmitoyl-CoA, S-palmitoyl-N-acetylcysteamine, and palmitoylated proteins. In contrast to PPT2, PPT1 can hydrolyze palmitoylated proteins and palmitoylcysteine. The chain is Palmitoyl-protein thioesterase 1 (PPT1) from Bos taurus (Bovine).